The chain runs to 322 residues: Olfactory receptor 11L1 (322 aa).

Over 1 to 25 (MEPQNTSTVTNFQLLGFQNLLEWQA) the chain is Extracellular. Asn-5 carries an N-linked (GlcNAc...) asparagine glycan. A helical membrane pass occupies residues 26–46 (LLFVIFLLIYCLTIIGNVVII). The Cytoplasmic segment spans residues 47 to 54 (TVVSQGLR). A helical membrane pass occupies residues 55–75 (LHSPMYMFLQHLSFLEVWYTS). Residues 76-99 (TTVPLLLANLLSWGQAISFSACMA) are Extracellular-facing. A disulfide bridge links Cys-97 with Cys-189. Residues 100 to 120 (QLYFFVFLGATECFLLAFMAY) form a helical membrane-spanning segment. Residues 121-139 (DRYLAICSPLRYPFLMHRG) are Cytoplasmic-facing. Residues 140–160 (LCARLVVVSWCTGVSTGFLPS) form a helical membrane-spanning segment. The Extracellular portion of the chain corresponds to 161–197 (LMISRLDFCGRNQINHFFCDLPPLMQLSCSRVYITEV). Residues 198 to 217 (TIFILSIAVLCICFFLTLGP) form a helical membrane-spanning segment. Topologically, residues 218-237 (YVFIVSSILRIPSTSGRRKT) are cytoplasmic. A helical membrane pass occupies residues 238-258 (FSTCGSHLAVVTLYYGTMISM). The Extracellular segment spans residues 259–271 (YVCPSPHLLPEIN). The helical transmembrane segment at 272-292 (KIISVFYTVVTPLLNPVIYSL) threads the bilayer. The Cytoplasmic portion of the chain corresponds to 293 to 322 (RNKDFKEAVRKVMRRKCGILWSTSKRKFLY).

It belongs to the G-protein coupled receptor 1 family.

The protein resides in the cell membrane. In terms of biological role, odorant receptor. The sequence is that of Olfactory receptor 11L1 (OR11L1) from Homo sapiens (Human).